A 392-amino-acid chain; its full sequence is Chaperone protein DnaJ (392 aa).

The J domain occupies 2–67; it reads DYYSILGISK…QKRDSYDRFG (66 aa). The CR-type zinc-finger motif lies at 148-226; that stretch reads GVEKELVVSG…CRGQGRVKDK (79 aa). Cys161, Cys164, Cys178, Cys181, Cys200, Cys203, Cys214, and Cys217 together coordinate Zn(2+). CXXCXGXG motif repeat units lie at residues 161–168, 178–185, 200–207, and 214–221; these read CETCSGQG, CERCKGSG, CPECGGEG, and CSSCRGQG.

Belongs to the DnaJ family. Homodimer. Requires Zn(2+) as cofactor.

Its subcellular location is the cytoplasm. Its function is as follows. Participates actively in the response to hyperosmotic and heat shock by preventing the aggregation of stress-denatured proteins and by disaggregating proteins, also in an autonomous, DnaK-independent fashion. Unfolded proteins bind initially to DnaJ; upon interaction with the DnaJ-bound protein, DnaK hydrolyzes its bound ATP, resulting in the formation of a stable complex. GrpE releases ADP from DnaK; ATP binding to DnaK triggers the release of the substrate protein, thus completing the reaction cycle. Several rounds of ATP-dependent interactions between DnaJ, DnaK and GrpE are required for fully efficient folding. Also involved, together with DnaK and GrpE, in the DNA replication of plasmids through activation of initiation proteins. The sequence is that of Chaperone protein DnaJ from Chlamydia pneumoniae (Chlamydophila pneumoniae).